A 152-amino-acid chain; its full sequence is Small ribosomal subunit protein uS19u (152 aa).

This sequence belongs to the universal ribosomal protein uS19 family.

The protein localises to the cytoplasm. The sequence is that of Small ribosomal subunit protein uS19u (RPS15A) from Arabidopsis thaliana (Mouse-ear cress).